A 380-amino-acid chain; its full sequence is Erythronate-4-phosphate dehydrogenase (380 aa).

Serine 45 and threonine 66 together coordinate substrate. NAD(+) is bound by residues 126–127 (QV), aspartate 146, threonine 175, 206–208 (ASR), and aspartate 232. Arginine 208 is a catalytic residue. The active site involves glutamate 237. Histidine 254 functions as the Proton donor in the catalytic mechanism. Glycine 257 provides a ligand contact to NAD(+). Residue tyrosine 258 coordinates substrate.

The protein belongs to the D-isomer specific 2-hydroxyacid dehydrogenase family. PdxB subfamily. In terms of assembly, homodimer.

It is found in the cytoplasm. It catalyses the reaction 4-phospho-D-erythronate + NAD(+) = (R)-3-hydroxy-2-oxo-4-phosphooxybutanoate + NADH + H(+). Its pathway is cofactor biosynthesis; pyridoxine 5'-phosphate biosynthesis; pyridoxine 5'-phosphate from D-erythrose 4-phosphate: step 2/5. In terms of biological role, catalyzes the oxidation of erythronate-4-phosphate to 3-hydroxy-2-oxo-4-phosphonooxybutanoate. This chain is Erythronate-4-phosphate dehydrogenase, found in Pseudomonas aeruginosa (strain UCBPP-PA14).